A 485-amino-acid chain; its full sequence is tRNA sulfurtransferase (485 aa).

Positions 61-165 (EELIALLQRI…DDKMMLVKTR (105 aa)) constitute a THUMP domain. Residues 183–184 (LI), K265, G287, and Q296 contribute to the ATP site. A disulfide bond links C344 and C456. A Rhodanese domain is found at 404–483 (LGENEVILDI…FSNVRVFAKN (80 aa)). C456 serves as the catalytic Cysteine persulfide intermediate.

The protein belongs to the ThiI family.

Its subcellular location is the cytoplasm. The catalysed reaction is [ThiI sulfur-carrier protein]-S-sulfanyl-L-cysteine + a uridine in tRNA + 2 reduced [2Fe-2S]-[ferredoxin] + ATP + H(+) = [ThiI sulfur-carrier protein]-L-cysteine + a 4-thiouridine in tRNA + 2 oxidized [2Fe-2S]-[ferredoxin] + AMP + diphosphate. It catalyses the reaction [ThiS sulfur-carrier protein]-C-terminal Gly-Gly-AMP + S-sulfanyl-L-cysteinyl-[cysteine desulfurase] + AH2 = [ThiS sulfur-carrier protein]-C-terminal-Gly-aminoethanethioate + L-cysteinyl-[cysteine desulfurase] + A + AMP + 2 H(+). Its pathway is cofactor biosynthesis; thiamine diphosphate biosynthesis. Catalyzes the ATP-dependent transfer of a sulfur to tRNA to produce 4-thiouridine in position 8 of tRNAs, which functions as a near-UV photosensor. Also catalyzes the transfer of sulfur to the sulfur carrier protein ThiS, forming ThiS-thiocarboxylate. This is a step in the synthesis of thiazole, in the thiamine biosynthesis pathway. The sulfur is donated as persulfide by IscS. This Haemophilus influenzae (strain 86-028NP) protein is tRNA sulfurtransferase.